Here is a 160-residue protein sequence, read N- to C-terminus: Putative 4-hydroxy-4-methyl-2-oxoglutarate aldolase (160 aa).

Substrate contacts are provided by residues 75 to 78 and Arg97; that span reads GDQL. Asp98 contributes to the a divalent metal cation binding site.

This sequence belongs to the class II aldolase/RraA-like family. As to quaternary structure, homotrimer. A divalent metal cation is required as a cofactor.

The catalysed reaction is 4-hydroxy-4-methyl-2-oxoglutarate = 2 pyruvate. It catalyses the reaction oxaloacetate + H(+) = pyruvate + CO2. Functionally, catalyzes the aldol cleavage of 4-hydroxy-4-methyl-2-oxoglutarate (HMG) into 2 molecules of pyruvate. Also contains a secondary oxaloacetate (OAA) decarboxylase activity due to the common pyruvate enolate transition state formed following C-C bond cleavage in the retro-aldol and decarboxylation reactions. In Vibrio vulnificus (strain YJ016), this protein is Putative 4-hydroxy-4-methyl-2-oxoglutarate aldolase.